A 276-amino-acid polypeptide reads, in one-letter code: NADPH-dependent 7-cyano-7-deazaguanine reductase (276 aa).

83 to 85 contributes to the substrate binding site; it reads IES. 85–86 serves as a coordination point for NADPH; sequence SK. Catalysis depends on cysteine 184, which acts as the Thioimide intermediate. Residue aspartate 191 is the Proton donor of the active site. A substrate-binding site is contributed by 223 to 224; the sequence is HE. An NADPH-binding site is contributed by 252 to 253; that stretch reads RG.

This sequence belongs to the GTP cyclohydrolase I family. QueF type 2 subfamily. Homodimer.

Its subcellular location is the cytoplasm. It catalyses the reaction 7-aminomethyl-7-carbaguanine + 2 NADP(+) = 7-cyano-7-deazaguanine + 2 NADPH + 3 H(+). It participates in tRNA modification; tRNA-queuosine biosynthesis. Its function is as follows. Catalyzes the NADPH-dependent reduction of 7-cyano-7-deazaguanine (preQ0) to 7-aminomethyl-7-deazaguanine (preQ1). This is NADPH-dependent 7-cyano-7-deazaguanine reductase from Pseudomonas entomophila (strain L48).